The chain runs to 338 residues: tRNA-specific 2-thiouridylase MnmA (338 aa).

ATP-binding positions include 6-13 (LMSGGIDS) and M32. The active-site Nucleophile is C87. A disulfide bridge links C87 with C185. Position 111 (G111) interacts with ATP. The interval 135 to 137 (KDQ) is interaction with tRNA. The Cysteine persulfide intermediate role is filled by C185. Positions 288–289 (RY) are interaction with tRNA.

The protein belongs to the MnmA/TRMU family.

The protein resides in the cytoplasm. It catalyses the reaction S-sulfanyl-L-cysteinyl-[protein] + uridine(34) in tRNA + AH2 + ATP = 2-thiouridine(34) in tRNA + L-cysteinyl-[protein] + A + AMP + diphosphate + H(+). Catalyzes the 2-thiolation of uridine at the wobble position (U34) of tRNA, leading to the formation of s(2)U34. The chain is tRNA-specific 2-thiouridylase MnmA from Syntrophomonas wolfei subsp. wolfei (strain DSM 2245B / Goettingen).